The primary structure comprises 82 residues: Large ribosomal subunit protein bL27 (82 aa).

Residues 1 to 54 (MAHKKGQGASRNGRDSESKRLGMKVGAGQRVSTGSILVRQRGTKWHPSQNVGRG) are disordered.

Belongs to the bacterial ribosomal protein bL27 family.

In Chlamydia caviae (strain ATCC VR-813 / DSM 19441 / 03DC25 / GPIC) (Chlamydophila caviae), this protein is Large ribosomal subunit protein bL27.